Consider the following 994-residue polypeptide: Phosphoenolpyruvate carboxylase (994 aa).

The segment at 1-66 (MKSSGSARAT…QGRTREDKDR (66 aa)) is disordered. Low complexity-rich tracts occupy residues 14 to 25 (AVSSSSAPAHAE) and 41 to 54 (AAAR…AASA). Active-site residues include His-204 and Lys-646.

Belongs to the PEPCase type 1 family. Mg(2+) is required as a cofactor.

It catalyses the reaction oxaloacetate + phosphate = phosphoenolpyruvate + hydrogencarbonate. Its function is as follows. Forms oxaloacetate, a four-carbon dicarboxylic acid source for the tricarboxylic acid cycle. This is Phosphoenolpyruvate carboxylase from Burkholderia pseudomallei (strain 668).